We begin with the raw amino-acid sequence, 339 residues long: tRNA N6-adenosine threonylcarbamoyltransferase (339 aa).

Residues histidine 112 and histidine 116 each contribute to the Fe cation site. Substrate contacts are provided by residues 135-139 (LVSGG), aspartate 168, glycine 181, and asparagine 273. Residue aspartate 301 participates in Fe cation binding.

The protein belongs to the KAE1 / TsaD family. Fe(2+) serves as cofactor.

It is found in the cytoplasm. The enzyme catalyses L-threonylcarbamoyladenylate + adenosine(37) in tRNA = N(6)-L-threonylcarbamoyladenosine(37) in tRNA + AMP + H(+). Functionally, required for the formation of a threonylcarbamoyl group on adenosine at position 37 (t(6)A37) in tRNAs that read codons beginning with adenine. Is involved in the transfer of the threonylcarbamoyl moiety of threonylcarbamoyl-AMP (TC-AMP) to the N6 group of A37, together with TsaE and TsaB. TsaD likely plays a direct catalytic role in this reaction. This chain is tRNA N6-adenosine threonylcarbamoyltransferase, found in Coxiella burnetii (strain RSA 493 / Nine Mile phase I).